A 105-amino-acid polypeptide reads, in one-letter code: Small ribosomal subunit protein uS10 (105 aa).

This sequence belongs to the universal ribosomal protein uS10 family. Part of the 30S ribosomal subunit.

Its function is as follows. Involved in the binding of tRNA to the ribosomes. The sequence is that of Small ribosomal subunit protein uS10 from Legionella pneumophila (strain Paris).